The chain runs to 1219 residues: Type IV pilus biogenesis factor PilY1 homolog PD_0502 (1219 aa).

A signal peptide spans 1 to 35; it reads MVGMSRIILNNLFFFRCVVAVFSAHSLVISGAVHA. Residues 212–234 are disordered; the sequence is GLSTDPLNTEGQPYDPSRHPLNS. Ca(2+) is bound by residues Gln958, Asn960, Ile962, and Asp964.

Belongs to the PilY1 family.

The protein resides in the fimbrium. Functionally, one of the three PilY1 homologs of X.fastidiosa, which are involved in bacterial twitching motility as component of the filamentous type IV pili (T4P). The protein is Type IV pilus biogenesis factor PilY1 homolog PD_0502 of Xylella fastidiosa (strain Temecula1 / ATCC 700964).